A 447-amino-acid polypeptide reads, in one-letter code: Histidine--tRNA ligase (447 aa).

It belongs to the class-II aminoacyl-tRNA synthetase family. In terms of assembly, homodimer.

It is found in the cytoplasm. It carries out the reaction tRNA(His) + L-histidine + ATP = L-histidyl-tRNA(His) + AMP + diphosphate + H(+). This chain is Histidine--tRNA ligase (hisS), found in Synechocystis sp. (strain ATCC 27184 / PCC 6803 / Kazusa).